We begin with the raw amino-acid sequence, 413 residues long: Heparan-sulfate 6-O-sulfotransferase 1-A (413 aa).

Residues Met-9–Lys-15 are Cytoplasmic-facing. The chain crosses the membrane as a helical; Signal-anchor for type II membrane protein span at residues Phe-16–Pro-36. The Lumenal portion of the chain corresponds to Gly-37 to Trp-413. His-92 to Thr-100 is a 3'-phosphoadenylyl sulfate binding site. Substrate-binding positions include Lys-122 to Lys-123, Arg-139, Trp-144, and His-149. The active-site Proton acceptor is His-149. 3'-phosphoadenylyl sulfate contacts are provided by Arg-183 and Ser-191. Substrate is bound by residues His-195 and Trp-202. A glycan (N-linked (GlcNAc...) asparagine) is linked at Asn-262. Position 315–317 (Met-315–Tyr-317) interacts with 3'-phosphoadenylyl sulfate. An N-linked (GlcNAc...) asparagine glycan is attached at Asn-318. A 3'-phosphoadenylyl sulfate-binding site is contributed by Arg-321–Ala-322. Asn-329 carries an N-linked (GlcNAc...) asparagine glycan. The disordered stretch occupies residues Pro-374 to Pro-401.

The protein belongs to the sulfotransferase 6 family. As to expression, during somitogenesis, first expressed in polster and presumptive forebrain. During mid-somitogenesis, expressed in eye, hindbrain and anterior spinal cord. During late somitogenesis, strong expression in eye and hindbrain, decreased levels in midbrain and anterior spinal cord. At 24 hours post-fertilization (hpf), expressed in neural retina and lens, brain and anterior spinal cord. At 36 hpf, retinal expression is confined to the ciliary marginal zone and there is strong expression in tectum, rhombomeres and otic vesicle. At 48 hpf, expressed in retinal ganglion cells and in tectum, rhombomeres and pectoral fin. Not detected in the vasculature during embryogenesis.

The protein resides in the membrane. The catalysed reaction is alpha-D-glucosaminyl-[heparan sulfate](n) + 3'-phosphoadenylyl sulfate = 6-sulfo-alpha-D-glucosaminyl-[heparan sulfate](n) + adenosine 3',5'-bisphosphate + H(+). Its function is as follows. 6-O-sulfation enzyme which catalyzes the transfer of sulfate from 3'-phosphoadenosine 5'-phosphosulfate (PAPS) to position 6 of the N-sulfoglucosamine residue (GlcNS) of heparan sulfate. This Danio rerio (Zebrafish) protein is Heparan-sulfate 6-O-sulfotransferase 1-A.